Reading from the N-terminus, the 75-residue chain is UPF0270 protein PSEEN1465 (75 aa).

It belongs to the UPF0270 family.

This chain is UPF0270 protein PSEEN1465, found in Pseudomonas entomophila (strain L48).